The primary structure comprises 429 residues: 3-phosphoshikimate 1-carboxyvinyltransferase (429 aa).

K20, S21, and R25 together coordinate 3-phosphoshikimate. K20 serves as a coordination point for phosphoenolpyruvate. 2 residues coordinate phosphoenolpyruvate: G89 and R118. Residues S164, S165, Q166, S192, D311, and K338 each coordinate 3-phosphoshikimate. Q166 serves as a coordination point for phosphoenolpyruvate. The active-site Proton acceptor is D311. R342 and R384 together coordinate phosphoenolpyruvate.

Belongs to the EPSP synthase family. Monomer.

The protein localises to the cytoplasm. It catalyses the reaction 3-phosphoshikimate + phosphoenolpyruvate = 5-O-(1-carboxyvinyl)-3-phosphoshikimate + phosphate. Its pathway is metabolic intermediate biosynthesis; chorismate biosynthesis. Functionally, catalyzes the transfer of the enolpyruvyl moiety of phosphoenolpyruvate (PEP) to the 5-hydroxyl of shikimate-3-phosphate (S3P) to produce enolpyruvyl shikimate-3-phosphate and inorganic phosphate. The chain is 3-phosphoshikimate 1-carboxyvinyltransferase from Methanococcus maripaludis (strain C6 / ATCC BAA-1332).